Reading from the N-terminus, the 528-residue chain is MAGCRLWVSLLLAAALACLATALWPWPQYIQTSHRRYTLYPNNFQFRYHAGSAAQAGCVVLDEAFRRYRSLLFGSGSWPRPSFSKKQQPLGKNILMVSVVTAECNEFPNLESVENYTLTINDDQCLLSSETVWGALRGLETFSQLVWKSAEGTFFINKTKITDFPRFPHRGILLDTSRHYLPLSSILNTLDVMAYNKFNVFHWHLVDDSSFPYESFTFPELTRKGSFNPVTHIYTAQDVKEVIEYARLRGIRVLAEFDTPGHTLSWGAGVPGLLTPCYSGSRLSGTYGPVNPSLNSTYDFMSTFFLEISSVFPDFYLHLGGDEVDFTCWKSNPNIQAFMKKKGFTDYKQLESFYIQTLLDIVSDYDKGYVVWQEVFDNKVKVRPDTIIQVWREEMPVQYMKEIEAITQAGFRALLSAPWYLNRVKYGPDWKEMYKVEPLAFRGTPAQKALVIGGEACMWGEYVDSTNLVPRLWPRAGAIAERLWSSNLTTNMDFAFKRLSHFRCELLRRGIQAQPISVGYCEQEFEHT.

Positions 1-22 (MAGCRLWVSLLLAAALACLATA) are cleaved as a signal peptide. Positions 23–88 (LWPWPQYIQT…PRPSFSKKQQ (66 aa)) are excised as a propeptide. The cysteines at positions 58 and 104 are disulfide-linked. Residues Asn115, Asn157, and Asn295 are each glycosylated (N-linked (GlcNAc...) asparagine). Cys277 and Cys328 are oxidised to a cystine. Glu323 serves as the catalytic Proton donor. Residues 422 to 423 (NR) form a critical for hydrolysis GM2 gangliosides region. Residue Asn487 is glycosylated (N-linked (GlcNAc...) asparagine). The cysteines at positions 504 and 521 are disulfide-linked.

It belongs to the glycosyl hydrolase 20 family. There are 3 beta-hexosaminidase isozymes: isozyme A (hexosaminidase A) is a heterodimer composed of one subunit alpha and one subunit beta (chain A and B); isozyme B (hexosaminidase B) is a homodimer of two beta subunits (two chains A and B); isozyme S (hexosaminidase S) is a homodimer of two alpha subunits. The composition of the dimer (isozyme A versus isozyme S) has a significant effect on the substrate specificity of the alpha subunit active site.

It is found in the lysosome. It catalyses the reaction Hydrolysis of terminal non-reducing N-acetyl-D-hexosamine residues in N-acetyl-beta-D-hexosaminides.. It carries out the reaction N-acetyl-beta-D-galactosaminyl-(1-&gt;4)-beta-D-3-sulfogalactosyl-(1-&gt;4)-beta-D-glucosyl-(1&lt;-&gt;1')-ceramide + H2O = a beta-D-3-sulfogalactosyl-(1-&gt;4)-beta-D-glucosyl-(1&lt;-&gt;1')-ceramide + N-acetyl-beta-D-galactosamine. The catalysed reaction is a ganglioside GM2 (d18:1(4E)) + H2O = a ganglioside GM3 (d18:1(4E)) + N-acetyl-beta-D-galactosamine. The enzyme catalyses a ganglioside GM2 + H2O = a ganglioside GM3 + N-acetyl-beta-D-galactosamine. It catalyses the reaction beta-D-GalNAc-(1-&gt;4)-alpha-L-IdoA-(1-&gt;3)-beta-D-GalNAc-4-sulfate-(1-&gt;4)-alpha-L-IdoA-(1-&gt;3)-D-GalNAc-4-sulfate + H2O = alpha-L-IdoA-(1-&gt;3)-beta-D-GalNAc-4-sulfate-(1-&gt;4)-alpha-L-IdoA-(1-&gt;3)-D-GalNAc-4-sulfate + N-acetyl-D-galactosamine. It carries out the reaction N-acetyl-beta-D-6-sulfogalactosaminyl-(1-&gt;4)-alpha-L-iduronyl-(1-&gt;3)-N-acetyl-D-6-sulfogalactosamine + H2O = alpha-L-iduronyl-(1-&gt;3)-N-acetyl-D-6-sulfogalactosamine + N-acetyl-D-6-sulfogalactosamine. Addition of GM2A stimulates the hydrolysis of sulfated glycosphingolipid SM2 and the ganglioside GM2. Hydrolyzes the non-reducing end N-acetyl-D-hexosamine and/or sulfated N-acetyl-D-hexosamine of glycoconjugates, such as the oligosaccharide moieties from proteins and neutral glycolipids, or from certain mucopolysaccharides. The isozyme S is as active as the isozyme A on the anionic bis-sulfated glycans, the chondroitin-6-sulfate trisaccharide (C6S-3), and the dermatan sulfate pentasaccharide, and the sulfated glycosphingolipid SM2. The isozyme B does not hydrolyze each of these substrates, however hydrolyzes efficiently neutral oligosaccharide. Only the isozyme A is responsible for the degradation of GM2 gangliosides in the presence of GM2A. The protein is Beta-hexosaminidase subunit alpha of Rattus norvegicus (Rat).